We begin with the raw amino-acid sequence, 762 residues long: LON peptidase N-terminal domain and RING finger protein 1 (762 aa).

The disordered stretch occupies residues 1-35 (MSSPAVARASPGGNREASGGPRSRNGPWEVGGGGE). The TPR 1 repeat unit spans residues 47–80 (WELLLRRGELLALGGHLKGALEAFAAALRRGAPA). The RING-type 1 zinc-finger motif lies at 118–154 (CLSCRGFLSEPVTVPCGHSYCRRCLRRELRARCRLCR). 3 TPR repeats span residues 201–233 (ARAAGRLGELLHEGRYREALAAACDALRAEPSD), 235–267 (TLKIYRAESYAGLQEFKAALEDLNAVLFQLPNW), and 268–301 (PEVYFRKGKVLQDAGFLGDALQLFLQCLALDEDF). Serine 420 carries the post-translational modification Phosphoserine. The RING-type 2 zinc-finger motif lies at 468 to 506 (CSLCMRLFFEPVTTPCGHSFCKNCLERCLDHAPYCPLCK). Positions 547-757 (TAELSHLTKN…KIQHILTYFS (211 aa)) constitute a Lon N-terminal domain.

In Mus musculus (Mouse), this protein is LON peptidase N-terminal domain and RING finger protein 1 (Lonrf1).